The following is a 276-amino-acid chain: MATYIVGDVHGCFDELQALLELAQFKKNKDQLWITGDLVGRGPKSLETLRFVKSLGDSAKIVLGNHDLHLLAIHQGIHSDKESDKLSALLNAPDCDELLTWLRFQPLFRRHPEFNFVMVHAGISPQWTIQQAQGYAQEVQNILQGNEFKKLLKNMYGNHPASWNDSSQGIKRLRFIINALTRMRYCLLDGSLEFYSKLAPEQTDSTIIKPWFEINTLDQSSDIIFGHWAALLGTGTKQGIYALDTGCVWGNSLSMLRWQDKKMFSFACQRQRVHSK.

This sequence belongs to the Ap4A hydrolase family.

The enzyme catalyses P(1),P(4)-bis(5'-adenosyl) tetraphosphate + H2O = 2 ADP + 2 H(+). Hydrolyzes diadenosine 5',5'''-P1,P4-tetraphosphate to yield ADP. This Psychromonas ingrahamii (strain DSM 17664 / CCUG 51855 / 37) protein is Bis(5'-nucleosyl)-tetraphosphatase, symmetrical.